A 309-amino-acid chain; its full sequence is HPr kinase/phosphorylase (309 aa).

Active-site residues include H138 and K159. 153–160 (GQSGVGKS) is a binding site for ATP. Residue S160 participates in Mg(2+) binding. The Proton acceptor; for phosphorylation activity. Proton donor; for dephosphorylation activity role is filled by D177. Positions 201–210 (LEIRGLGIIN) are important for the catalytic mechanism of both phosphorylation and dephosphorylation. E202 serves as a coordination point for Mg(2+). Residue R243 is part of the active site. An important for the catalytic mechanism of dephosphorylation region spans residues 264-269 (PVRPGR).

Belongs to the HPrK/P family. Homohexamer. Requires Mg(2+) as cofactor.

The enzyme catalyses [HPr protein]-L-serine + ATP = [HPr protein]-O-phospho-L-serine + ADP + H(+). It carries out the reaction [HPr protein]-O-phospho-L-serine + phosphate + H(+) = [HPr protein]-L-serine + diphosphate. In terms of biological role, catalyzes the ATP- as well as the pyrophosphate-dependent phosphorylation of a specific serine residue in HPr, a phosphocarrier protein of the phosphoenolpyruvate-dependent sugar phosphotransferase system (PTS). HprK/P also catalyzes the pyrophosphate-producing, inorganic phosphate-dependent dephosphorylation (phosphorolysis) of seryl-phosphorylated HPr (P-Ser-HPr). The two antagonistic activities of HprK/P are regulated by several intracellular metabolites, which change their concentration in response to the absence or presence of rapidly metabolisable carbon sources (glucose, fructose, etc.) in the growth medium. Also phosphorylates/dephosphorylates the HPr-like catabolite repression protein crh on a specific serine residue. Therefore, by controlling the phosphorylation state of HPr and crh, HPrK/P is a sensor enzyme that plays a major role in the regulation of carbon metabolism and sugar transport: it mediates carbon catabolite repression (CCR), and regulates PTS-catalyzed carbohydrate uptake and inducer exclusion. The sequence is that of HPr kinase/phosphorylase from Bacillus cereus (strain B4264).